Here is a 105-residue protein sequence, read N- to C-terminus: Small ribosomal subunit protein uS10 (105 aa).

Belongs to the universal ribosomal protein uS10 family. As to quaternary structure, part of the 30S ribosomal subunit.

Functionally, involved in the binding of tRNA to the ribosomes. The chain is Small ribosomal subunit protein uS10 from Rickettsia canadensis (strain McKiel).